Consider the following 162-residue polypeptide: Small ribosomal subunit protein uS19 (162 aa).

Over residues 1–27 (MAKQKKFSGKGSARSKRKQNRKQVGPR) the composition is skewed to basic residues. A disordered region spans residues 1-29 (MAKQKKFSGKGSARSKRKQNRKQVGPRRR).

It belongs to the universal ribosomal protein uS19 family.

Functionally, protein S19 forms a complex with S13 that binds strongly to the 16S ribosomal RNA. In Methanococcus aeolicus (strain ATCC BAA-1280 / DSM 17508 / OCM 812 / Nankai-3), this protein is Small ribosomal subunit protein uS19.